A 143-amino-acid polypeptide reads, in one-letter code: Small ribosomal subunit protein uS12 (143 aa).

Residues 1–20 (MGKCRGLRTARKLRSHRRDH) show a composition bias toward basic residues. The disordered stretch occupies residues 1–26 (MGKCRGLRTARKLRSHRRDHKWHDKQ). A Glycyl lysine isopeptide (Lys-Gly) (interchain with G-Cter in SUMO2) cross-link involves residue K37. Position 54 is an N6-succinyllysine (K54). At P62 the chain carries 3-hydroxyproline. K135 carries the N6-acetyllysine modification.

It belongs to the universal ribosomal protein uS12 family. As to quaternary structure, component of the 40S small ribosomal subunit. Part of the small subunit (SSU) processome, composed of more than 70 proteins and the RNA chaperone small nucleolar RNA (snoRNA) U3. In terms of assembly, (Microbial infection) Interacts with the African swine fever virus (ASFV) ubiquitin-conjugating enzyme UBCv1; this interaction probably plays a role in the viral regulation of host protein synthesis. Post-translationally, hydroxylation at Pro-62 affects translation termination efficiency.

It localises to the cytoplasm. The protein localises to the cytosol. Its subcellular location is the rough endoplasmic reticulum. It is found in the nucleus. The protein resides in the nucleolus. In terms of biological role, component of the ribosome, a large ribonucleoprotein complex responsible for the synthesis of proteins in the cell. The small ribosomal subunit (SSU) binds messenger RNAs (mRNAs) and translates the encoded message by selecting cognate aminoacyl-transfer RNA (tRNA) molecules. The large subunit (LSU) contains the ribosomal catalytic site termed the peptidyl transferase center (PTC), which catalyzes the formation of peptide bonds, thereby polymerizing the amino acids delivered by tRNAs into a polypeptide chain. The nascent polypeptides leave the ribosome through a tunnel in the LSU and interact with protein factors that function in enzymatic processing, targeting, and the membrane insertion of nascent chains at the exit of the ribosomal tunnel. Plays an important role in translational accuracy. Part of the small subunit (SSU) processome, first precursor of the small eukaryotic ribosomal subunit. During the assembly of the SSU processome in the nucleolus, many ribosome biogenesis factors, an RNA chaperone and ribosomal proteins associate with the nascent pre-rRNA and work in concert to generate RNA folding, modifications, rearrangements and cleavage as well as targeted degradation of pre-ribosomal RNA by the RNA exosome. The chain is Small ribosomal subunit protein uS12 (RPS23) from Sus scrofa (Pig).